A 154-amino-acid polypeptide reads, in one-letter code: SKP1-like protein 13 (154 aa).

Positions 96–154 are interaction with the F-box domain of F-box proteins; the sequence is MLAANYLNIKDLLDLGCQTVADMITGKKPDEIRALLGIENDFTPEEEEEIRKENQWAFE.

The protein belongs to the SKP1 family. In terms of assembly, part of a SCF (SKP1-cullin-F-box) protein ligase complex. Interacts with ADO3/FKF1, EBF1, PP2A13, SKIP15, SKIP16, CPR1/CPR30, At1g55000, At3g61590, At1g67340, At1g78100, At3g04660, At4g38940, At4g39550 and At5g49610. In terms of tissue distribution, mostly expressed in inflorescences, and, to a lower extent, in seedlings and siliques. Also detected in cotyledons, leaves, pollen and seeds.

Its subcellular location is the nucleus. Its pathway is protein modification; protein ubiquitination. In terms of biological role, involved in ubiquitination and subsequent proteasomal degradation of target proteins. Together with CUL1, RBX1 and a F-box protein, it forms a SCF E3 ubiquitin ligase complex. The functional specificity of this complex depends on the type of F-box protein. In the SCF complex, it serves as an adapter that links the F-box protein to CUL1. This Arabidopsis thaliana (Mouse-ear cress) protein is SKP1-like protein 13 (ASK13).